We begin with the raw amino-acid sequence, 170 residues long: Arginine repressor (170 aa).

The protein belongs to the ArgR family.

The protein localises to the cytoplasm. It functions in the pathway amino-acid biosynthesis; L-arginine biosynthesis [regulation]. Its function is as follows. Regulates arginine biosynthesis genes. In Mycobacterium tuberculosis (strain ATCC 25177 / H37Ra), this protein is Arginine repressor.